Reading from the N-terminus, the 308-residue chain is Atrochrysone carboxyl ACP thioesterase (308 aa).

Zn(2+) contacts are provided by His-99, His-101, Asp-103, and His-104. The active-site Proton donor/acceptor is Asp-103.

Belongs to the metallo-beta-lactamase superfamily. Zn(2+) is required as a cofactor.

It catalyses the reaction atrochrysone carboxyl-[ACP] + H2O = atrochrysone carboxylate + holo-[ACP] + H(+). It participates in secondary metabolite biosynthesis. Functionally, atrochrysone carboxyl ACP thioesterase; part of the gene cluster that mediates the biosynthesis of physcion, a natural anthraquinone fungicide that can prevent plant fungal infections. The pathway begins with the polyketide synthase AcPKS that condenses 8 malonyl-CoA units to synthesize atrochrysone thioester which is released from the synthase by the atrochrysone carboxyl ACP thioesterase AcTE that breaks the thioester bond and leads to free atrochrysone carboxylic acid. Spontaneous decarboxylation of atrochrysone carboxylic acid leads to the formation of atrochrysone. Then, atrochrysone undergoes spontaneous dehydration and oxidation, giving the products emodin anthrone and emodin. The O-methyltransferase AcOMT then methylates the C-6 hydroxyl of emodin to form physcion. The polypeptide is Atrochrysone carboxyl ACP thioesterase (Aspergillus chevalieri (Eurotium chevalieri)).